The sequence spans 295 residues: MFKQYLQVTKPGIIFGNLISVIGGFLLASKGSIDYTLFASTLVGVSLVVASGCVFNNYIDMDIDRKMERTKNRVLVKGLISPTVSLVYATLLGIAGFMLLWFGANPLACWLGVMGFVVYVGVYSLYMKRHSVYGTLIGSLSGAAPPVIGYCAVTNEFDSGALILLAIFSLWQMPHSYAIAIFRFKDYQAANIPVLPVVKGISVAKNHITLYIIAFAVATLMLSLGGYAGYKYLVVAAAVSVWWLGMALRGYKVEDDKVWARKLFVFSIVAITSLSVMMSVDFMVPDSHSLLTYVW.

The next 9 helical transmembrane spans lie at 8-28 (VTKP…FLLA), 35-55 (YTLF…GCVF), 84-104 (VSLV…WFGA), 107-127 (LACW…SLYM), 132-152 (VYGT…GYCA), 162-182 (LILL…IAIF), 208-228 (ITLY…GGYA), 233-253 (LVVA…GYKV), and 264-284 (FVFS…DFMV).

Belongs to the UbiA prenyltransferase family. Protoheme IX farnesyltransferase subfamily.

The protein resides in the cell inner membrane. The enzyme catalyses heme b + (2E,6E)-farnesyl diphosphate + H2O = Fe(II)-heme o + diphosphate. It participates in porphyrin-containing compound metabolism; heme O biosynthesis; heme O from protoheme: step 1/1. Its function is as follows. Converts heme B (protoheme IX) to heme O by substitution of the vinyl group on carbon 2 of heme B porphyrin ring with a hydroxyethyl farnesyl side group. The protein is Protoheme IX farnesyltransferase of Enterobacter sp. (strain 638).